A 566-amino-acid chain; its full sequence is Putative lipase ATG15 (566 aa).

The Cytoplasmic segment spans residues 1–17 (MGSKHKKNASKSLRAFS). A helical; Signal-anchor for type II membrane protein transmembrane segment spans residues 18 to 38 (FIILSASIALVYIFNPVKLIF). Residues 39-566 (PSSIIRFHHG…CVEWGDEEDA (528 aa)) are Lumenal-facing. N-linked (GlcNAc...) asparagine glycans are attached at residues Asn264 and Asn348. Ser366 functions as the Charge relay system in the catalytic mechanism. The N-linked (GlcNAc...) asparagine glycan is linked to Asn483. Positions 507 to 545 (DSLDDEPPLPNPLRPGKPSTTSSSQHHTSTTTTTETSRP) are disordered. Over residues 522-543 (GKPSTTSSSQHHTSTTTTTETS) the composition is skewed to low complexity.

Belongs to the AB hydrolase superfamily. Lipase family. In terms of assembly, binds to both phosphatidylinositol (PI) and phosphatidylinositol 3,5-bisphosphate (PIP2).

It is found in the endosome. The protein localises to the multivesicular body membrane. The protein resides in the prevacuolar compartment membrane. The enzyme catalyses a triacylglycerol + H2O = a diacylglycerol + a fatty acid + H(+). Its function is as follows. Lipase which is essential for lysis of subvacuolar cytoplasm to vacuole targeted bodies and intravacuolar autophagic bodies. Involved in the lysis of intravacuolar multivesicular body (MVB) vesicles. The intravacuolar membrane disintegration by ATG15 is critical to life span extension. The sequence is that of Putative lipase ATG15 (ATG15) from Meyerozyma guilliermondii (strain ATCC 6260 / CBS 566 / DSM 6381 / JCM 1539 / NBRC 10279 / NRRL Y-324) (Yeast).